Reading from the N-terminus, the 207-residue chain is Large ribosomal subunit protein uL3c (207 aa).

A disordered region spans residues Thr-129–Met-148.

This sequence belongs to the universal ribosomal protein uL3 family. In terms of assembly, part of the 50S ribosomal subunit.

The protein localises to the plastid. Its subcellular location is the chloroplast. In terms of biological role, one of the primary rRNA binding proteins, it binds directly near the 3'-end of the 23S rRNA, where it nucleates assembly of the 50S subunit. This Phaeodactylum tricornutum (strain CCAP 1055/1) protein is Large ribosomal subunit protein uL3c (rpl3).